The chain runs to 100 residues: Cytochrome bo(3) ubiquinol oxidase subunit 4 (100 aa).

Over methionine 1–tyrosine 9 the chain is Cytoplasmic. Residues leucine 10–phenylalanine 32 form a helical membrane-spanning segment. The Extracellular portion of the chain corresponds to serine 33 to tyrosine 36. The chain crosses the membrane as a helical span at residues leucine 37–leucine 59. Topologically, residues aspartate 60–lysine 68 are cytoplasmic. Residues leucine 69–isoleucine 90 traverse the membrane as a helical segment. Topologically, residues lysine 91–methionine 100 are extracellular.

The protein belongs to the cytochrome c oxidase bacterial subunit 4 family. Heterooctamer of two A chains, two B chains, two C chains and two D chains.

It localises to the cell membrane. Its function is as follows. Cytochrome bo(3) ubiquinol terminal oxidase is the component of the aerobic respiratory chain of E.coli that predominates when cells are grown at high aeration. Has proton pump activity across the membrane in addition to electron transfer, pumping 2 protons/electron. The chain is Cytochrome bo(3) ubiquinol oxidase subunit 4 (cyoD) from Buchnera aphidicola subsp. Baizongia pistaciae (strain Bp).